Reading from the N-terminus, the 139-residue chain is MFRTMLKSKIHRATVTQADLHYVGSCTIDADLMDAADILEGEQIDIVDIDNGNRLTTYAITGERGSGVIGINGAAARLISPGDLVIIIGYGIFDNAELGDYHPRVIFVDENNKQVELGEDPAHAPAGSGLKDPRHPEGE.

The Schiff-base intermediate with substrate; via pyruvic acid role is filled by serine 25. Residue serine 25 is modified to Pyruvic acid (Ser). Threonine 57 is a substrate binding site. Tyrosine 58 acts as the Proton donor in catalysis. 73 to 75 is a substrate binding site; that stretch reads GAA. Residues 116-139 form a disordered region; it reads ELGEDPAHAPAGSGLKDPRHPEGE.

Belongs to the PanD family. In terms of assembly, heterooctamer of four alpha and four beta subunits. The cofactor is pyruvate. In terms of processing, is synthesized initially as an inactive proenzyme, which is activated by self-cleavage at a specific serine bond to produce a beta-subunit with a hydroxyl group at its C-terminus and an alpha-subunit with a pyruvoyl group at its N-terminus.

It is found in the cytoplasm. It carries out the reaction L-aspartate + H(+) = beta-alanine + CO2. It participates in cofactor biosynthesis; (R)-pantothenate biosynthesis; beta-alanine from L-aspartate: step 1/1. Catalyzes the pyruvoyl-dependent decarboxylation of aspartate to produce beta-alanine. The protein is Aspartate 1-decarboxylase of Corynebacterium urealyticum (strain ATCC 43042 / DSM 7109).